Consider the following 255-residue polypeptide: Diphthine synthase (255 aa).

S-adenosyl-L-methionine-binding positions include Leu9, Asp85, Val88, 113–114 (SI), Leu164, Ala207, and His232.

Belongs to the diphthine synthase family. In terms of assembly, homodimer.

It catalyses the reaction 2-[(3S)-amino-3-carboxypropyl]-L-histidyl-[translation elongation factor 2] + 3 S-adenosyl-L-methionine = diphthine-[translation elongation factor 2] + 3 S-adenosyl-L-homocysteine + 3 H(+). It functions in the pathway protein modification; peptidyl-diphthamide biosynthesis. S-adenosyl-L-methionine-dependent methyltransferase that catalyzes the trimethylation of the amino group of the modified target histidine residue in translation elongation factor 2 (EF-2), to form an intermediate called diphthine. The three successive methylation reactions represent the second step of diphthamide biosynthesis. This is Diphthine synthase from Methanococcus vannielii (strain ATCC 35089 / DSM 1224 / JCM 13029 / OCM 148 / SB).